The following is a 413-amino-acid chain: Divalent metal cation transporter MntH (413 aa).

Topologically, residues 1–19 (MTDNRVENSSGRAARKLRL) are cytoplasmic. A helical transmembrane segment spans residues 20 to 39 (ALMGPAFIAAIGYIDPGNFA). The Periplasmic segment spans residues 40-51 (TNIQAGASFGYQ). Residues 52–71 (LLWVVVWANLMAMLIQILSA) form a helical membrane-spanning segment. Residues 72-95 (KLGIATGKNLAEQIRDHYPRPVVW) are Cytoplasmic-facing. A helical transmembrane segment spans residues 96–118 (FYWVQAEIIAMATDLAEFIGAAI). At 119–125 (GFKLILG) the chain is on the periplasmic side. A helical transmembrane segment spans residues 126 to 145 (VSLLQGAVLTGIATFLILML). Over 146–155 (QRRGQKPLEK) the chain is Cytoplasmic. A helical membrane pass occupies residues 156-175 (VIGGLLLFVAAAYIVELFFS). The Periplasmic portion of the chain corresponds to 176–196 (QPDMAQLGKGMVIPALPNPEA). The chain crosses the membrane as a helical span at residues 197–220 (VFLAAGVLGATIMPHVIYLHSSLT). The Cytoplasmic segment spans residues 221–238 (QHLHGGTRQQRYSATKWD). The chain crosses the membrane as a helical span at residues 239–258 (VAIAMTIAGFVNLAMMATAA). Topologically, residues 259–276 (AAFHFSGHTGIADLDQAY) are periplasmic. A helical transmembrane segment spans residues 277 to 297 (LTLEPLLSHAAATVFGLSLVA). Over 298 to 327 (AGLSSTVVGTLAGQVVMQGFVRFHIPLWVR) the chain is Cytoplasmic. A helical transmembrane segment spans residues 328 to 344 (RTITMLPSFIVILMGLD). Residues 345 to 350 (PTRILV) lie on the Periplasmic side of the membrane. The helical transmembrane segment at 351–370 (MSQVLLSFGIALALVPLLIF) threads the bilayer. At 371–387 (TSNATLMGELVNTRRVK) the chain is on the cytoplasmic side. Residues 388–406 (QIGWIIVVLVVALNIWLLV) traverse the membrane as a helical segment. At 407–413 (GTVMGLS) the chain is on the periplasmic side.

The protein belongs to the NRAMP family.

It localises to the cell inner membrane. H(+)-stimulated, divalent metal cation uptake system. This Salmonella schwarzengrund (strain CVM19633) protein is Divalent metal cation transporter MntH.